The sequence spans 845 residues: Envelope glycoprotein gp160 (845 aa).

Positions 1–28 (METQRNYPSLWRWGTLILGMLLICSAAQ) are cleaved as a signal peptide. The Extracellular segment spans residues 29-673 (NLWVTVYYGV…ISHWLWYIKI (645 aa)). Residues Cys-50 and Cys-70 are joined by a disulfide bond. 20 N-linked (GlcNAc...) asparagine; by host glycosylation sites follow: Asn-84, Asn-126, Asn-132, Asn-133, Asn-136, Asn-149, Asn-153, Asn-179, Asn-180, Asn-190, Asn-223, Asn-227, Asn-234, Asn-255, Asn-269, Asn-286, Asn-294, Asn-324, Asn-331, and Asn-347. Cystine bridges form between Cys-115-Cys-198, Cys-122-Cys-189, Cys-127-Cys-150, Cys-211-Cys-240, and Cys-221-Cys-232. A V1 region spans residues 127–149 (CTNVRNNTSNSTSSMEAGGELTN). The tract at residues 150 to 189 (CSFNVTTVLRDKQQKVHALFYRLDVVPIDNNSTQYRLINC) is V2. The V3 stretch occupies residues 289–322 (CTRPNNNTRTSIHLGPGRAFYATGDIIGDIRQAH). Cys-289 and Cys-323 form a disulfide bridge. Residues 355–365 (NSGGDMEVRTH) form a CD4-binding loop region. Disulfide bonds link Cys-369–Cys-434 and Cys-376–Cys-407. Residues 376–407 (CNTSGLFNSSWEMHTNYTSNDTKGNENITLPC) are V4. Residues Asn-377, Asn-383, Asn-391, Asn-395, Asn-402, Asn-437, Asn-449, and Asn-454 are each glycosylated (N-linked (GlcNAc...) asparagine; by host). V5 stretches follow at residues 450-460 (ASAENYTFRPG) and 452-460 (AENYTFRPG). The tract at residues 501–521 (AVGMGASFLGFLGAAGSTMGA) is fusion peptide. Residues 563–581 (KQLQARVLAVERYLRDQQL) are immunosuppression. Residues Cys-587 and Cys-593 are joined by a disulfide bond. Residues Asn-600, Asn-605, Asn-614, and Asn-626 are each glycosylated (N-linked (GlcNAc...) asparagine; by host). Positions 622 to 656 (KQISNYTEEIYRLLEVSQTQQEKNEQDLLALDKWA) form a coiled coil. The interval 651–672 (ALDKWASLWTWFDISHWLWYIK) is MPER; binding to GalCer. A helical membrane pass occupies residues 674–694 (FIMIVGGLIGLRIIFAVLSIV). Residues 695 to 845 (NRVRQGYSPL…IRQGFERSLL (151 aa)) are Cytoplasmic-facing. The YXXL motif; contains endocytosis signal signature appears at 701-704 (YSPL). Residues 708–731 (TLVPNPRGPDRPEGTEEGGGEQDR) are disordered. The Di-leucine internalization motif signature appears at 844–845 (LL).

It belongs to the HIV-1 env protein family. As to quaternary structure, the mature envelope protein (Env) consists of a homotrimer of non-covalently associated gp120-gp41 heterodimers. The resulting complex protrudes from the virus surface as a spike. There seems to be as few as 10 spikes on the average virion. Interacts with host CD4, CCR5 and CXCR4. Gp120 also interacts with the C-type lectins CD209/DC-SIGN and CLEC4M/DC-SIGNR (collectively referred to as DC-SIGN(R)). Gp120 and gp41 interact with GalCer. Gp120 interacts with host ITGA4/ITGB7 complex; on CD4+ T-cells, this interaction results in rapid activation of integrin ITGAL/LFA-1, which facilitates efficient cell-to-cell spreading of HIV-1. Gp120 interacts with cell-associated heparan sulfate; this interaction increases virus infectivity on permissive cells and may be involved in infection of CD4- cells. In terms of assembly, the mature envelope protein (Env) consists of a homotrimer of non-covalently associated gp120-gp41 heterodimers. The resulting complex protrudes from the virus surface as a spike. There seems to be as few as 10 spikes on the average virion. Post-translationally, highly glycosylated by host. The high number of glycan on the protein is reffered to as 'glycan shield' because it contributes to hide protein sequence from adaptive immune system. In terms of processing, palmitoylation of the transmembrane protein and of Env polyprotein (prior to its proteolytic cleavage) is essential for their association with host cell membrane lipid rafts. Palmitoylation is therefore required for envelope trafficking to classical lipid rafts, but not for viral replication. Specific enzymatic cleavages in vivo yield mature proteins. Envelope glycoproteins are synthesized as an inactive precursor that is heavily N-glycosylated and processed likely by host cell furin in the Golgi to yield the mature SU and TM proteins. The cleavage site between SU and TM requires the minimal sequence [KR]-X-[KR]-R. About 2 of the 9 disulfide bonds of gp41 are reduced by P4HB/PDI, following binding to CD4 receptor.

It localises to the virion membrane. The protein resides in the host cell membrane. Its subcellular location is the host endosome membrane. Its function is as follows. Oligomerizes in the host endoplasmic reticulum into predominantly trimers. In a second time, gp160 transits in the host Golgi, where glycosylation is completed. The precursor is then proteolytically cleaved in the trans-Golgi and thereby activated by cellular furin or furin-like proteases to produce gp120 and gp41. In terms of biological role, attaches the virus to the host lymphoid cell by binding to the primary receptor CD4. This interaction induces a structural rearrangement creating a high affinity binding site for a chemokine coreceptor like CXCR4 and/or CCR5. Acts as a ligand for CD209/DC-SIGN and CLEC4M/DC-SIGNR, which are respectively found on dendritic cells (DCs), and on endothelial cells of liver sinusoids and lymph node sinuses. These interactions allow capture of viral particles at mucosal surfaces by these cells and subsequent transmission to permissive cells. HIV subverts the migration properties of dendritic cells to gain access to CD4+ T-cells in lymph nodes. Virus transmission to permissive T-cells occurs either in trans (without DCs infection, through viral capture and transmission), or in cis (following DCs productive infection, through the usual CD4-gp120 interaction), thereby inducing a robust infection. In trans infection, bound virions remain infectious over days and it is proposed that they are not degraded, but protected in non-lysosomal acidic organelles within the DCs close to the cell membrane thus contributing to the viral infectious potential during DCs' migration from the periphery to the lymphoid tissues. On arrival at lymphoid tissues, intact virions recycle back to DCs' cell surface allowing virus transmission to CD4+ T-cells. Functionally, acts as a class I viral fusion protein. Under the current model, the protein has at least 3 conformational states: pre-fusion native state, pre-hairpin intermediate state, and post-fusion hairpin state. During fusion of viral and target intracellular membranes, the coiled coil regions (heptad repeats) assume a trimer-of-hairpins structure, positioning the fusion peptide in close proximity to the C-terminal region of the ectodomain. The formation of this structure appears to drive apposition and subsequent fusion of viral and target cell membranes. Complete fusion occurs in host cell endosomes and is dynamin-dependent, however some lipid transfer might occur at the plasma membrane. The virus undergoes clathrin-dependent internalization long before endosomal fusion, thus minimizing the surface exposure of conserved viral epitopes during fusion and reducing the efficacy of inhibitors targeting these epitopes. Membranes fusion leads to delivery of the nucleocapsid into the cytoplasm. This is Envelope glycoprotein gp160 from Homo sapiens (Human).